The chain runs to 176 residues: Nucleoside triphosphate/diphosphate phosphatase (176 aa).

The active-site Proton donor is the R23. Residues N87, D103, D105, D107, D120, and E123 each contribute to the Mg(2+) site.

The protein belongs to the Ntdp family. Mg(2+) is required as a cofactor.

It catalyses the reaction a ribonucleoside 5'-triphosphate + H2O = a ribonucleoside 5'-diphosphate + phosphate + H(+). The catalysed reaction is a ribonucleoside 5'-diphosphate + H2O = a ribonucleoside 5'-phosphate + phosphate + H(+). Its function is as follows. Has nucleoside phosphatase activity towards nucleoside triphosphates and nucleoside diphosphates. This Lactococcus lactis subsp. cremoris (strain MG1363) protein is Nucleoside triphosphate/diphosphate phosphatase.